The primary structure comprises 410 residues: Elongation factor Tu (410 aa).

In terms of domain architecture, tr-type G spans 10 to 219; sequence KTHVNVGTIG…ALDTYIPDPV (210 aa). GTP-binding positions include 19–26, 88–92, and 143–146; these read GHVDHGKT, DCPGH, and NKCD. Threonine 26 lines the Mg(2+) pocket.

It belongs to the TRAFAC class translation factor GTPase superfamily. Classic translation factor GTPase family. EF-Tu/EF-1A subfamily. In terms of assembly, monomer.

The protein localises to the cytoplasm. It carries out the reaction GTP + H2O = GDP + phosphate + H(+). Functionally, GTP hydrolase that promotes the GTP-dependent binding of aminoacyl-tRNA to the A-site of ribosomes during protein biosynthesis. This chain is Elongation factor Tu, found in Brachyspira hyodysenteriae (Treponema hyodysenteriae).